A 249-amino-acid chain; its full sequence is Segregation and condensation protein A (249 aa).

This sequence belongs to the ScpA family. As to quaternary structure, component of a cohesin-like complex composed of ScpA, ScpB and the Smc homodimer, in which ScpA and ScpB bind to the head domain of Smc. The presence of the three proteins is required for the association of the complex with DNA.

It is found in the cytoplasm. Functionally, participates in chromosomal partition during cell division. May act via the formation of a condensin-like complex containing Smc and ScpB that pull DNA away from mid-cell into both cell halves. This Listeria monocytogenes serotype 4b (strain CLIP80459) protein is Segregation and condensation protein A.